Consider the following 349-residue polypeptide: Aspartate carbamoyltransferase catalytic subunit (349 aa).

Carbamoyl phosphate is bound by residues Arg-59 and Thr-60. Lys-87 contributes to the L-aspartate binding site. The carbamoyl phosphate site is built by Arg-109, His-142, and Gln-145. L-aspartate contacts are provided by Arg-182 and Arg-253. Gly-294 and Pro-295 together coordinate carbamoyl phosphate.

The protein belongs to the aspartate/ornithine carbamoyltransferase superfamily. ATCase family. In terms of assembly, heterododecamer (2C3:3R2) of six catalytic PyrB chains organized as two trimers (C3), and six regulatory PyrI chains organized as three dimers (R2).

It carries out the reaction carbamoyl phosphate + L-aspartate = N-carbamoyl-L-aspartate + phosphate + H(+). It participates in pyrimidine metabolism; UMP biosynthesis via de novo pathway; (S)-dihydroorotate from bicarbonate: step 2/3. Its function is as follows. Catalyzes the condensation of carbamoyl phosphate and aspartate to form carbamoyl aspartate and inorganic phosphate, the committed step in the de novo pyrimidine nucleotide biosynthesis pathway. The protein is Aspartate carbamoyltransferase catalytic subunit of Synechococcus sp. (strain CC9902).